Consider the following 539-residue polypeptide: Laccase-1 (539 aa).

Positions 1–21 (MAFTAISLFLAALGVINTAFA) are cleaved as a signal peptide. 2 consecutive Plastocyanin-like domains span residues 37 to 154 (AEVN…YDPE) and 166 to 309 (ESTV…HYLG). Asparagine 78 is a glycosylation site (N-linked (GlcNAc...) asparagine). Cu cation-binding residues include histidine 88 and histidine 90. 2 disulfides stabilise this stretch: cysteine 109–cysteine 513 and cysteine 141–cysteine 228. Asparagine 120 is a glycosylation site (N-linked (GlcNAc...) asparagine). Residues histidine 133 and histidine 135 each coordinate Cu cation. Asparagine 202, asparagine 233, asparagine 240, asparagine 293, asparagine 318, asparagine 353, asparagine 385, and asparagine 405 each carry an N-linked (GlcNAc...) asparagine glycan. Residues 374 to 495 (SPTVPVLLQI…GFAVVMAEDP (122 aa)) form the Plastocyanin-like 3 domain. Cu cation-binding residues include histidine 421, histidine 424, and histidine 426. Asparagine 457 is a glycosylation site (N-linked (GlcNAc...) asparagine). Cu cation is bound by residues histidine 476, cysteine 477, histidine 478, and histidine 482. Asparagine 532 carries an N-linked (GlcNAc...) asparagine glycan.

The protein belongs to the multicopper oxidase family. Cu cation serves as cofactor.

It is found in the secreted. The enzyme catalyses 4 hydroquinone + O2 = 4 benzosemiquinone + 2 H2O. With respect to regulation, inhibited by chloride ions. Inhibited by citrate. Inhibited by oxalate. Activated by acetate. Its function is as follows. In vitro, has activity towards 2,2'-azino-bis(3-ethylbenzthiazoline-6-sulfonic acid) (ABTS), 2,6-dimethoxy-phenol, and guaiacol. Although brown rot fungi preferentially degrade hemicellulose and cellulose, the enzyme may contribute to generating small amounts of lignin breakdown products required for catalytic reactions. The chain is Laccase-1 from Fomitopsis schrenkii (Brown rot fungus).